Reading from the N-terminus, the 293-residue chain is NAD kinase (293 aa).

Residue Asp73 is the Proton acceptor of the active site. NAD(+) is bound by residues Asp73–Gly74, His78, Asn147–Asp148, Arg158, Arg175, Asp177, Thr188–Ser193, and Gln248.

It belongs to the NAD kinase family. The cofactor is a divalent metal cation.

The protein localises to the cytoplasm. The catalysed reaction is NAD(+) + ATP = ADP + NADP(+) + H(+). In terms of biological role, involved in the regulation of the intracellular balance of NAD and NADP, and is a key enzyme in the biosynthesis of NADP. Catalyzes specifically the phosphorylation on 2'-hydroxyl of the adenosine moiety of NAD to yield NADP. In Nitrosococcus oceani (strain ATCC 19707 / BCRC 17464 / JCM 30415 / NCIMB 11848 / C-107), this protein is NAD kinase.